The sequence spans 273 residues: Putative pyruvate, phosphate dikinase regulatory protein (273 aa).

151–158 (GVSRTSKT) serves as a coordination point for ADP.

It belongs to the pyruvate, phosphate/water dikinase regulatory protein family. PDRP subfamily.

It catalyses the reaction N(tele)-phospho-L-histidyl/L-threonyl-[pyruvate, phosphate dikinase] + ADP = N(tele)-phospho-L-histidyl/O-phospho-L-threonyl-[pyruvate, phosphate dikinase] + AMP + H(+). It carries out the reaction N(tele)-phospho-L-histidyl/O-phospho-L-threonyl-[pyruvate, phosphate dikinase] + phosphate + H(+) = N(tele)-phospho-L-histidyl/L-threonyl-[pyruvate, phosphate dikinase] + diphosphate. In terms of biological role, bifunctional serine/threonine kinase and phosphorylase involved in the regulation of the pyruvate, phosphate dikinase (PPDK) by catalyzing its phosphorylation/dephosphorylation. This chain is Putative pyruvate, phosphate dikinase regulatory protein, found in Desulfitobacterium hafniense (strain Y51).